Consider the following 463-residue polypeptide: Nuclear hormone receptor family member nhr-3 (463 aa).

A DNA-binding region (nuclear receptor) is located at residues 50–125; sequence STICSVCCDE…VGMEPDAIRP (76 aa). 2 NR C4-type zinc fingers span residues 53 to 73 and 89 to 113; these read CSVC…CFGC and CRYS…FQKC. The span at 121–131 shows a compositional bias: basic and acidic residues; sequence DAIRPDRDKTG. Residues 121 to 143 form a disordered region; it reads DAIRPDRDKTGRQKNPRRNTEGS. In terms of domain architecture, NR LBD spans 199-462; it reads EIENIVIQLQ…VLEELLFLDR (264 aa).

This sequence belongs to the nuclear hormone receptor family.

It localises to the nucleus. Its function is as follows. Orphan nuclear receptor. This chain is Nuclear hormone receptor family member nhr-3 (nhr-3), found in Caenorhabditis elegans.